A 485-amino-acid polypeptide reads, in one-letter code: Glutamyl-tRNA(Gln) amidotransferase subunit A (485 aa).

Residues Lys-80 and Ser-155 each act as charge relay system in the active site. Ser-179 functions as the Acyl-ester intermediate in the catalytic mechanism.

It belongs to the amidase family. GatA subfamily. In terms of assembly, heterotrimer of A, B and C subunits.

The catalysed reaction is L-glutamyl-tRNA(Gln) + L-glutamine + ATP + H2O = L-glutaminyl-tRNA(Gln) + L-glutamate + ADP + phosphate + H(+). Allows the formation of correctly charged Gln-tRNA(Gln) through the transamidation of misacylated Glu-tRNA(Gln) in organisms which lack glutaminyl-tRNA synthetase. The reaction takes place in the presence of glutamine and ATP through an activated gamma-phospho-Glu-tRNA(Gln). The sequence is that of Glutamyl-tRNA(Gln) amidotransferase subunit A from Leptospira borgpetersenii serovar Hardjo-bovis (strain L550).